The sequence spans 687 residues: Glycine--tRNA ligase beta subunit (687 aa).

The protein belongs to the class-II aminoacyl-tRNA synthetase family. Tetramer of two alpha and two beta subunits.

The protein localises to the cytoplasm. The catalysed reaction is tRNA(Gly) + glycine + ATP = glycyl-tRNA(Gly) + AMP + diphosphate. In Neisseria meningitidis serogroup A / serotype 4A (strain DSM 15465 / Z2491), this protein is Glycine--tRNA ligase beta subunit.